The primary structure comprises 360 residues: MSLTRLNIEAFRNIQSAQLIPAPGINLIYGQNGSGKTSILEAIYFLGMGRSFRSHLSQRVINNDDDKLTLFATLNLARGDSKIGLRRFRSGETEVRIDGEKVKRLSTLAETLPIQVITPESFSLLFEGPKSRRQFIDWGAFHADPQFYGAWTNVRRVLKQRNQLLRNGSAYSNIQFWDQEFVRYAEQVTEIRNHYVDSLNELLKGIIGEFLPSVDVKVSFTRGWDSKTDFAELLENQYSRDLATGHTVSGPHKADLRLRVGTLPAQDALSRGQLKLLVCALRIAQGKLLKQQIDKHSIYLVDDLPSELDAQHRQLLLKQLTDTGAQVFVTAIDPAAIVDSLHTPPSRMFHVEQGRVTVIE.

G30–T37 provides a ligand contact to ATP.

It belongs to the RecF family.

The protein resides in the cytoplasm. In terms of biological role, the RecF protein is involved in DNA metabolism; it is required for DNA replication and normal SOS inducibility. RecF binds preferentially to single-stranded, linear DNA. It also seems to bind ATP. In Shewanella baltica (strain OS155 / ATCC BAA-1091), this protein is DNA replication and repair protein RecF.